Reading from the N-terminus, the 460-residue chain is Ammonium transporter Rh type C (460 aa).

The Cytoplasmic portion of the chain corresponds to 1-9 (MIWNTNLRW). A helical transmembrane segment spans residues 10–30 (RLPVACLLLEVALIALFGVFV). The Extracellular portion of the chain corresponds to 31 to 61 (RYDMDADPHWVQEKVIKNLSTDLENEFYYRY). Asn48 is a glycosylation site (N-linked (GlcNAc...) asparagine). The helical transmembrane segment at 62–82 (PSFQDVHVMIFVGFGFLMTFL) threads the bilayer. Residues 83-89 (QRYGYSS) lie on the Cytoplasmic side of the membrane. A helical membrane pass occupies residues 90–110 (VGFNFLLAAFGIQWALLMQGW). The Extracellular portion of the chain corresponds to 111–125 (LQSFDGRYILVDLEN). A helical transmembrane segment spans residues 126–145 (LINADFCVGSVCVAFGAVLG). Over 146-151 (KVSPVQ) the chain is Cytoplasmic. The helical transmembrane segment at 152-174 (LLIMTLFQVTLFSINEYILLNLL) threads the bilayer. Residues 175–179 (EVKDS) lie on the Extracellular side of the membrane. The helical transmembrane segment at 180–200 (GGSMTIHAFGAYFGLTVAWIL) threads the bilayer. At 201 to 219 (YRPNLHLSKERQSSTYHSD) the chain is on the cytoplasmic side. A helical membrane pass occupies residues 220 to 240 (LFAMIGTLFLWMYWPSFNSAI). Residues 241-251 (SNHGDAQHRAA) are Extracellular-facing. A helical transmembrane segment spans residues 252–272 (INTYCSLAACVLTSVALSSAL). Residues 273 to 285 (HRKGKLDMVHIQN) lie on the Cytoplasmic side of the membrane. The chain crosses the membrane as a helical span at residues 286 to 303 (ATLAGGVGLGTVAELMVL). Residues 304–306 (PFG) are Extracellular-facing. Residues 307 to 329 (SLIIGFVCGIVSTLGFVYLTPFL) traverse the membrane as a helical segment. The Cytoplasmic portion of the chain corresponds to 330–346 (ESRLHIQDTCGVHNLHG). Residues 347 to 367 (IPGIIGGIAGAVTASIANIDL) form a helical membrane-spanning segment. At 368-396 (YGEEGLAYAFGIERSKLNWSPNMQGRFQA) the chain is on the extracellular side. The chain crosses the membrane as a helical span at residues 397–417 (AGLFVSLAMALVGGVIVGVIL). The Cytoplasmic portion of the chain corresponds to 418-460 (RLPFWGQAPDENCFEDAVYWEIPKEPKSTALRSEDSSIKPPEP).

This sequence belongs to the ammonium transporter (TC 2.A.49) family. Rh subfamily. As to quaternary structure, homotrimer. N-glycosylated.

The protein resides in the apical cell membrane. The enzyme catalyses NH4(+)(in) = NH4(+)(out). It catalyses the reaction methylamine(out) = methylamine(in). The catalysed reaction is CO2(out) = CO2(in). Its function is as follows. Ammonium transporter involved in the maintenance of acid-base homeostasis. Transports ammonium and its related derivative methylammonium across the plasma membrane of epithelial cells likely contributing to renal transepithelial ammonia transport and ammonia metabolism. Postulated to primarily mediate an electroneutral bidirectional transport of NH3 ammonia species according to a mechanism that implies interaction of an NH4(+) ion with acidic residues of the pore entry followed by dissociation of NH4(+) into NH3 and H(+). As a result NH3 transits through the central pore and is protonated on the extracellular side reforming NH4(+). May act as a CO2 channel providing for renal acid secretion. The polypeptide is Ammonium transporter Rh type C (RHCG) (Bos taurus (Bovine)).